Reading from the N-terminus, the 348-residue chain is Uroporphyrinogen decarboxylase (348 aa).

Residues 27–31 (RQAGR), phenylalanine 46, aspartate 76, tyrosine 152, serine 207, and histidine 320 each bind substrate.

It belongs to the uroporphyrinogen decarboxylase family. Homodimer.

The protein resides in the cytoplasm. The enzyme catalyses uroporphyrinogen III + 4 H(+) = coproporphyrinogen III + 4 CO2. It participates in porphyrin-containing compound metabolism; protoporphyrin-IX biosynthesis; coproporphyrinogen-III from 5-aminolevulinate: step 4/4. Functionally, catalyzes the decarboxylation of four acetate groups of uroporphyrinogen-III to yield coproporphyrinogen-III. The protein is Uroporphyrinogen decarboxylase of Bacillus mycoides (strain KBAB4) (Bacillus weihenstephanensis).